The primary structure comprises 122 residues: Phospholipase A2 crotoxin basic subunit CBb (122 aa).

7 disulfides stabilise this stretch: cysteine 26–cysteine 115, cysteine 28–cysteine 44, cysteine 43–cysteine 95, cysteine 49–cysteine 122, cysteine 50–cysteine 88, cysteine 57–cysteine 81, and cysteine 75–cysteine 86. Residues tyrosine 27, glycine 29, and glycine 31 each coordinate Ca(2+). Histidine 47 is an active-site residue. Residue aspartate 48 coordinates Ca(2+). Aspartate 89 is a catalytic residue.

It belongs to the phospholipase A2 family. Group II subfamily. D49 sub-subfamily. As to quaternary structure, heterodimer of one of the acidic (CA1, CA2, CA3 or CA4) and one of the basic (CBa1, CBa2, CBb, CBc or CBd) subunits; non-covalently linked. The acidic subunit is non-toxic, without enzymatic activity and comprises 3 peptides that are cross-linked by 5 disulfide bridges. The basic subunit is toxic, has phospholipase A2 activity and is composed of a single chain. Multiple variants of each subunit give different crotoxin complexes that can be subdivided into 2 classes: (1) those of high toxicity, low PLA2 activity (CBb, CBc and CBd linked with high affinity to any CA) and high stability (K(d)=4.5 nM) and (2) those of moderate toxicity, high PLA2 activity (CBa2 linked with low affinity to any CA) and low stability (K(d)=25 nM). It depends on Ca(2+) as a cofactor. In terms of tissue distribution, expressed by the venom gland.

The protein resides in the secreted. It carries out the reaction a 1,2-diacyl-sn-glycero-3-phosphocholine + H2O = a 1-acyl-sn-glycero-3-phosphocholine + a fatty acid + H(+). Heterodimer CA-CB: Crotoxin is a potent presynaptic neurotoxin that possesses phospholipase A2 (PLA2) activity and exerts a lethal action by blocking neuromuscular transmission. It consists of a non-covalent association of a basic and weakly toxic PLA2 subunit (CBa2, CBb, CBc, or CBd), with a small acidic, non-enzymatic and non-toxic subunit (CA1, CA2, CA3 or CA4). The complex acts by binding to a specific 48-kDa protein (R48) receptor located on presynaptic membranes, forming a transient ternary complex CA-CB-R48, followed by dissociation of the CA-CB complex and release of the CA subunit. At equilibrium, only the CB subunits remain associated with the specific crotoxin receptor. In addition to neurotoxicity, crotoxin has been found to exert myotoxicity, nephrotoxicity, and cardiovascular toxicity. Moreover, anti-inflammatory, immunomodulatory, anti-tumor and analgesic effects of crotoxin have also been reported. Functionally, monomer CBb: The basic subunit of crotoxin is a snake venom phospholipase A2 (PLA2) that exhibits weak neurotoxicity (10-fold less than the heterodimer) and strong anticoagulant effects by binding to factor Xa (F10) and inhibiting the prothrombinase activity. In addition, it shows the same effects described for the heterodimer and binds the nucleotide-binding domain (NBD1) of CFTR chloride channels and increases the channel current. PLA2 catalyzes the calcium-dependent hydrolysis of the 2-acyl groups in 3-sn-phosphoglycerides. The protein is Phospholipase A2 crotoxin basic subunit CBb of Crotalus durissus terrificus (South American rattlesnake).